A 52-amino-acid chain; its full sequence is Large ribosomal subunit protein bL32c (52 aa).

This sequence belongs to the bacterial ribosomal protein bL32 family.

The protein localises to the plastid. Its subcellular location is the chloroplast. In Capsella bursa-pastoris (Shepherd's purse), this protein is Large ribosomal subunit protein bL32c.